The sequence spans 489 residues: Glucose-6-phosphate 1-dehydrogenase (489 aa).

NADP(+)-binding positions include 15–22 (GATGDLAK), Arg-49, 86–87 (DV), and Lys-149. The substrate site is built by His-179, Lys-183, Glu-217, and Asp-236. His-241 serves as the catalytic Proton acceptor. Positions 341 and 346 each coordinate substrate.

The protein belongs to the glucose-6-phosphate dehydrogenase family.

The enzyme catalyses D-glucose 6-phosphate + NADP(+) = 6-phospho-D-glucono-1,5-lactone + NADPH + H(+). It participates in carbohydrate degradation; pentose phosphate pathway; D-ribulose 5-phosphate from D-glucose 6-phosphate (oxidative stage): step 1/3. In terms of biological role, catalyzes the oxidation of glucose 6-phosphate to 6-phosphogluconolactone. In Bacillus subtilis (strain 168), this protein is Glucose-6-phosphate 1-dehydrogenase.